Consider the following 363-residue polypeptide: NADH-quinone oxidoreductase subunit H (363 aa).

Transmembrane regions (helical) follow at residues V29 to W49, G62 to F82, F96 to F116, V127 to G147, A163 to A183, F202 to V222, I239 to L257, I264 to V286, T299 to F319, and F339 to I359.

This sequence belongs to the complex I subunit 1 family. In terms of assembly, NDH-1 is composed of 14 different subunits. Subunits NuoA, H, J, K, L, M, N constitute the membrane sector of the complex.

Its subcellular location is the cell inner membrane. The catalysed reaction is a quinone + NADH + 5 H(+)(in) = a quinol + NAD(+) + 4 H(+)(out). In terms of biological role, NDH-1 shuttles electrons from NADH, via FMN and iron-sulfur (Fe-S) centers, to quinones in the respiratory chain. The immediate electron acceptor for the enzyme in this species is believed to be ubiquinone. Couples the redox reaction to proton translocation (for every two electrons transferred, four hydrogen ions are translocated across the cytoplasmic membrane), and thus conserves the redox energy in a proton gradient. This subunit may bind ubiquinone. The chain is NADH-quinone oxidoreductase subunit H from Xanthomonas campestris pv. campestris (strain 8004).